Here is a 193-residue protein sequence, read N- to C-terminus: MRYLLAVLIAAAFVISSGTSVSTIADDELILSKDTTIGAAVAPTFHDDKRMLQTKAVNGLEEERGWPLLETGIGKIKMGGKKFKHATKRMFGMVSPAGEAKFEAYKGLHKLKRGLIRMYRRVKWWFQKNILRQKHALEEGATRAKHKVSEANQKLKHRTKESEKTAYHRLKEAFQKFRHRMKDFFKKMRVYAY.

The first 20 residues, 1–20 (MRYLLAVLIAAAFVISSGTS), serve as a signal peptide directing secretion. The RxLR-dEER signature appears at 50-64 (RMLQTKAVNGLEEER).

This sequence belongs to the RxLR effector family.

The protein localises to the secreted. The protein resides in the host membrane. Functionally, secreted effector that completely suppresses the host cell death induced by cell death-inducing proteins. The protein is Secreted RxLR effector protein 126 of Plasmopara viticola (Downy mildew of grapevine).